We begin with the raw amino-acid sequence, 214 residues long: tRNA (guanine-N(7)-)-methyltransferase (214 aa).

Positions 35, 60, 87, and 113 each coordinate S-adenosyl-L-methionine. Aspartate 113 is a catalytic residue. Residues lysine 117 and aspartate 149 each contribute to the substrate site.

This sequence belongs to the class I-like SAM-binding methyltransferase superfamily. TrmB family.

The enzyme catalyses guanosine(46) in tRNA + S-adenosyl-L-methionine = N(7)-methylguanosine(46) in tRNA + S-adenosyl-L-homocysteine. It functions in the pathway tRNA modification; N(7)-methylguanine-tRNA biosynthesis. Functionally, catalyzes the formation of N(7)-methylguanine at position 46 (m7G46) in tRNA. The polypeptide is tRNA (guanine-N(7)-)-methyltransferase (Prochlorococcus marinus (strain NATL1A)).